We begin with the raw amino-acid sequence, 275 residues long: MGMSAISTETLSLGYGDAVIIDELNLTIPKGEITVFIGSNGCGKSTLLRSLARLMKPRGGSVLLEGRAIAKLPTKEVAKELAILPQGPSAPEGLTVHQLVKQGRYPYQNWLKQWSKEDEEAVERALKATKLEDMADRAVDSLSGGQRQRAWIAMTLAQETDIILLDEPTTYLDMTHQIEILDLLFELNEKEDRTIVMVLHDLNLACRYAHHLVAIKDKRIYAEGRPEEVITCDLVQNVFSMNCQVTQDPLFGTPLCIPHGRGRCIVQEAAFTSHG.

Residues isoleucine 6–asparagine 242 form the ABC transporter domain. Glycine 38–serine 45 contacts ATP.

This sequence belongs to the ABC transporter superfamily. In terms of assembly, the iron-hydroxamate siderophore complex is composed of one ATP-binding protein (YusV), two transmembrane proteins (YfiZ and YfhA) and a solute-binding protein (YfiY); the catechoplate siderophore complex is composed of one ATP-binding protein (YusV), two transmembrane proteins (FeuB and FeuC) and a solute-binding protein (FeuA).

Its subcellular location is the cell membrane. Provides the ATPase subunit for at least 2 ABC transporter complexes; YfiYZ/YfhA/YusV involved in import of the iron-hydroxamate siderophores schizokinen, arthrobactin and corprogen, and FeuABC/YusV involved in import of the catecholate siderophores bacillibactin and enterobactin. Probably responsible for energy coupling to the transport system. The chain is Probable siderophore transport system ATP-binding protein YusV (yusV) from Bacillus subtilis (strain 168).